A 137-amino-acid chain; its full sequence is Nucleoside diphosphate kinase (137 aa).

The ATP site is built by K9, F58, R86, T92, R103, and N113. H121 acts as the Pros-phosphohistidine intermediate in catalysis.

It belongs to the NDK family. As to quaternary structure, homotetramer. Requires Mg(2+) as cofactor.

It is found in the cytoplasm. It catalyses the reaction a 2'-deoxyribonucleoside 5'-diphosphate + ATP = a 2'-deoxyribonucleoside 5'-triphosphate + ADP. The catalysed reaction is a ribonucleoside 5'-diphosphate + ATP = a ribonucleoside 5'-triphosphate + ADP. Its function is as follows. Major role in the synthesis of nucleoside triphosphates other than ATP. The ATP gamma phosphate is transferred to the NDP beta phosphate via a ping-pong mechanism, using a phosphorylated active-site intermediate. This Streptococcus pneumoniae (strain P1031) protein is Nucleoside diphosphate kinase.